The primary structure comprises 270 residues: Oxidized low-density lipoprotein receptor 1 (270 aa).

Positions 1-14 (MTVDDPKGMKDQLD) are enriched in basic and acidic residues. Residues 1–22 (MTVDDPKGMKDQLDQKPNGKTA) form a disordered region. Over 1–33 (MTVDDPKGMKDQLDQKPNGKTAKGFVSSWRWYP) the chain is Cytoplasmic. The chain crosses the membrane as a helical; Signal-anchor for type II membrane protein span at residues 34–56 (AAVTLGVLCLGLLVTVILLILQL). A lipid anchor (S-palmitoyl cysteine) is attached at Cys42. Positions 57-146 (SQVSDLIKKQ…SGPCPQDWLW (90 aa)) are neck. The Extracellular portion of the chain corresponds to 57-270 (SQVSDLIKKQ…QKKANLLRAQ (214 aa)). N-linked (GlcNAc...) asparagine glycans are attached at residues Asn69 and Asn135. The stretch at 85-135 (RRSEKSAQESQKELKEMIETLAHKLDEKSKKLMELHRQNLNLQEVLKEAAN) forms a coiled coil. Intrachain disulfides connect Cys140–Cys151, Cys168–Cys260, and Cys239–Cys252. Residues 147–261 (HEENCYQFSS…CILTAFSICQ (115 aa)) enclose the C-type lectin domain.

As to quaternary structure, homodimer; disulfide-linked. May form a hexamer composed of 3 homodimers. Interacts with HSP70. N-glycosylated. Highly expressed in endothelial cells, aortic intima and lung. Expressed at low level in other tissues.

The protein localises to the cell membrane. It localises to the membrane raft. Its subcellular location is the secreted. Receptor that mediates the recognition, internalization and degradation of oxidatively modified low density lipoprotein (oxLDL) by vascular endothelial cells. OxLDL is a marker of atherosclerosis that induces vascular endothelial cell activation and dysfunction, resulting in pro-inflammatory responses, pro-oxidative conditions and apoptosis. Its association with oxLDL induces the activation of NF-kappa-B through an increased production of intracellular reactive oxygen and a variety of pro-atherogenic cellular responses including a reduction of nitric oxide (NO) release, monocyte adhesion and apoptosis. In addition to binding oxLDL, it acts as a receptor for the HSP70 protein involved in antigen cross-presentation to naive T-cells in dendritic cells, thereby participating in cell-mediated antigen cross-presentation. Also involved in inflammatory process, by acting as a leukocyte-adhesion molecule at the vascular interface in endotoxin-induced inflammation. Also acts as a receptor for advanced glycation end (AGE) products, activated platelets, monocytes, apoptotic cells and both Gram-negative and Gram-positive bacteria. This chain is Oxidized low-density lipoprotein receptor 1 (OLR1), found in Bos taurus (Bovine).